Consider the following 224-residue polypeptide: LRP chaperone MESD (224 aa).

Residues 1 to 29 (MAASRWLRAVLLFLCASDLLLLPPPNAYA) form the signal peptide. A chaperone domain region spans residues 1–155 (MAASRWLRAV…DRAIFMLRDG (155 aa)). 2 disordered regions span residues 28 to 49 (YAAD…IRDY) and 178 to 224 (GQMY…REDL). The interval 156–195 (SYAWEIKDFLVSQDRCAEVTLEGQMYPGKGGGSKEKNKTK) is escort domain. The segment covering 187-224 (GSKEKNKTKPEKAKKKEGDPKPRASKEDNRAGSRREDL) has biased composition (basic and acidic residues). Asparagine 192 is a glycosylation site (N-linked (GlcNAc...) asparagine). The short motif at 221–224 (REDL) is the Prevents secretion from ER element.

Belongs to the MESD family. As to quaternary structure, monomer. Interacts with LRP5; the interaction prevents LRP5 from forming aggregates and chaperones LRP6 to the plasma membrane. Interacts with LRP6; the interaction prevents LRP6 from forming aggregates and chaperones LRP6 to the plasma membrane. Interacts with LRP4; the interaction promotes glycosylation of LRP4 and its cell-surface expression. In terms of tissue distribution, expressed in many tissues, but not in skeletal muscles. In the retina expressed in retinal ganglion cells, inner and outer plexiform layers, photoreceptor inner and outer segments and retinal pigment epithelium (at protein level).

The protein resides in the endoplasmic reticulum. In terms of biological role, chaperone specifically assisting the folding of beta-propeller/EGF modules within the family of low-density lipoprotein receptors (LDLRs). Acts as a modulator of the Wnt pathway through chaperoning the coreceptors of the canonical Wnt pathway, LRP5 and LRP6, to the plasma membrane. Essential for specification of embryonic polarity and mesoderm induction. Plays an essential role in neuromuscular junction (NMJ) formation by promoting cell-surface expression of LRP4. May regulate phagocytosis of apoptotic retinal pigment epithelium (RPE) cells. In Mus musculus (Mouse), this protein is LRP chaperone MESD.